A 355-amino-acid chain; its full sequence is Uroporphyrinogen decarboxylase (355 aa).

Residues 27 to 31, Asp-78, Tyr-155, Thr-210, and His-328 each bind substrate; that span reads RQAGR.

The protein belongs to the uroporphyrinogen decarboxylase family. As to quaternary structure, homodimer.

Its subcellular location is the cytoplasm. It catalyses the reaction uroporphyrinogen III + 4 H(+) = coproporphyrinogen III + 4 CO2. Its pathway is porphyrin-containing compound metabolism; protoporphyrin-IX biosynthesis; coproporphyrinogen-III from 5-aminolevulinate: step 4/4. Catalyzes the decarboxylation of four acetate groups of uroporphyrinogen-III to yield coproporphyrinogen-III. The chain is Uroporphyrinogen decarboxylase from Pseudomonas fluorescens (strain SBW25).